A 916-amino-acid chain; its full sequence is Protein O-GlcNAcase (916 aa).

The tract at residues 1–46 is disordered; the sequence is MVQKESQAALEERESERNANPAAASGASLEQSVAPAPGEDNPSGAG. Residues 60 to 336 form the GH84 domain; that stretch reads FLCGVVEGFY…TLATWYKSNM (277 aa). Residues Gly-67, Lys-98, and Asp-174 each coordinate a protein. Residue Asp-175 is the Proton donor of the active site. Residues Tyr-219, 278–280, Asp-285, and Asn-313 each bind a protein; that span reads WDN. Phosphoserine is present on Ser-364. The tract at residues 443–465 is disordered; sequence ALSGEPSVLTKEEEKKQPDEEPM. The span at 452–461 shows a compositional bias: basic and acidic residues; the sequence is TKEEEKKQPD.

This sequence belongs to the glycosyl hydrolase 84 family. In terms of assembly, monomer. Interacts with CLOCK. Post-translationally, proteolytically cleaved by caspase-3 during apoptosis. The fragments interact with each other; cleavage does not decrease enzyme activity.

The protein localises to the cytoplasm. It is found in the nucleus. The enzyme catalyses 3-O-(N-acetyl-beta-D-glucosaminyl)-L-seryl-[protein] + H2O = N-acetyl-D-glucosamine + L-seryl-[protein]. The catalysed reaction is 3-O-(N-acetyl-beta-D-glucosaminyl)-L-threonyl-[protein] + H2O = L-threonyl-[protein] + N-acetyl-D-glucosamine. Cleaves GlcNAc but not GalNAc from O-glycosylated proteins. Deglycosylates a large and diverse number of proteins, such as CRYAB, ELK1, GSDMD, LMNB1 and TAB1. Can use p-nitrophenyl-beta-GlcNAc and 4-methylumbelliferone-GlcNAc as substrates but not p-nitrophenyl-beta-GalNAc or p-nitrophenyl-alpha-GlcNAc (in vitro). Does not bind acetyl-CoA and does not have histone acetyltransferase activity. This Mus musculus (Mouse) protein is Protein O-GlcNAcase.